The following is a 206-amino-acid chain: mRNA-decapping protein D9 (206 aa).

The Nudix hydrolase domain occupies 23 to 206; that stretch reads KKTHVFAICV…FIYNTLLYSK (184 aa). Residues 104-125 carry the Nudix box motif; that stretch reads GKLNKSETIDDCIRREIKEETD. Glu110 is a Mg(2+) binding site. Catalysis depends on Glu119, which acts as the Nucleophile. Mg(2+) contacts are provided by Glu123 and Asp144.

The protein belongs to the Nudix hydrolase family. It depends on Mg(2+) as a cofactor. Requires Mn(2+) as cofactor.

Functionally, decapping enzyme required for the removal of the 5'-end m7GpppN cap tethered to viral and host mRNAs to allow their decay in cells. May therefore accelerate viral and cellular mRNA turnover to eliminate competing host mRNAs and allow stage-specific synthesis of viral proteins. Acceleration of the turnover of cellular transcripts may even promote the shutoff of host protein synthesis. Does not cleave unmethylated RNAs or RNAs shorter than 24 nucleotides. This chain is mRNA-decapping protein D9, found in Oryctolagus cuniculus (Rabbit).